A 295-amino-acid polypeptide reads, in one-letter code: Diaminopimelate epimerase (295 aa).

Substrate contacts are provided by N11 and N67. C76 acts as the Proton donor in catalysis. Residues 77-78, N171, N210, and 228-229 each bind substrate; these read GN and ER. The active-site Proton acceptor is C237. 238–239 provides a ligand contact to substrate; that stretch reads GT.

Belongs to the diaminopimelate epimerase family. Homodimer.

Its subcellular location is the cytoplasm. The enzyme catalyses (2S,6S)-2,6-diaminopimelate = meso-2,6-diaminopimelate. The protein operates within amino-acid biosynthesis; L-lysine biosynthesis via DAP pathway; DL-2,6-diaminopimelate from LL-2,6-diaminopimelate: step 1/1. Catalyzes the stereoinversion of LL-2,6-diaminopimelate (L,L-DAP) to meso-diaminopimelate (meso-DAP), a precursor of L-lysine. In Methanocaldococcus jannaschii (strain ATCC 43067 / DSM 2661 / JAL-1 / JCM 10045 / NBRC 100440) (Methanococcus jannaschii), this protein is Diaminopimelate epimerase.